The following is a 290-amino-acid chain: 4-hydroxy-tetrahydrodipicolinate synthase (290 aa).

Threonine 44 lines the pyruvate pocket. The active-site Proton donor/acceptor is tyrosine 132. The Schiff-base intermediate with substrate role is filled by lysine 160. Isoleucine 202 contributes to the pyruvate binding site.

It belongs to the DapA family. In terms of assembly, homotetramer; dimer of dimers.

It localises to the cytoplasm. It carries out the reaction L-aspartate 4-semialdehyde + pyruvate = (2S,4S)-4-hydroxy-2,3,4,5-tetrahydrodipicolinate + H2O + H(+). It participates in amino-acid biosynthesis; L-lysine biosynthesis via DAP pathway; (S)-tetrahydrodipicolinate from L-aspartate: step 3/4. Catalyzes the condensation of (S)-aspartate-beta-semialdehyde [(S)-ASA] and pyruvate to 4-hydroxy-tetrahydrodipicolinate (HTPA). This is 4-hydroxy-tetrahydrodipicolinate synthase from Geotalea daltonii (strain DSM 22248 / JCM 15807 / FRC-32) (Geobacter daltonii).